The primary structure comprises 389 residues: Glutamate 5-kinase (389 aa).

Residue K16 participates in ATP binding. Residues S56, D143, and N155 each contribute to the substrate site. 175 to 176 lines the ATP pocket; sequence SD. In terms of domain architecture, PUA spans 281-358; sequence AGELHVDDGA…AEIEAILGYA (78 aa).

It belongs to the glutamate 5-kinase family.

It localises to the cytoplasm. It carries out the reaction L-glutamate + ATP = L-glutamyl 5-phosphate + ADP. It functions in the pathway amino-acid biosynthesis; L-proline biosynthesis; L-glutamate 5-semialdehyde from L-glutamate: step 1/2. Catalyzes the transfer of a phosphate group to glutamate to form L-glutamate 5-phosphate. The polypeptide is Glutamate 5-kinase (Rhizobium etli (strain CIAT 652)).